A 79-amino-acid polypeptide reads, in one-letter code: Defensin-like protein 3 (79 aa).

A signal peptide spans 1-29; it reads MAKFASIITLLFAALVVFAAFEAPTMVEA. Intrachain disulfides connect Cys32–Cys79, Cys43–Cys64, Cys49–Cys73, and Cys53–Cys75.

Belongs to the DEFL family.

The protein resides in the secreted. Possesses antifungal activity sensitive to inorganic cations. This is Defensin-like protein 3 (AFP3) from Brassica napus (Rape).